Consider the following 450-residue polypeptide: Crh-like protein 4 (450 aa).

The N-terminal stretch at 1 to 21 is a signal peptide; the sequence is MRLSLVGVAIGLLSSSAIVTA. Cys-27 and Cys-34 are oxidised to a cystine. The GH16 domain maps to 46 to 228; it reads YDFTKGSSPD…WAGGETDYSA (183 aa). Catalysis depends on Glu-119, which acts as the Nucleophile. The Proton donor role is filled by Glu-123. Residues Glu-123, Lys-201, Trp-205, and Thr-216 each coordinate chitin. N-linked (GlcNAc...) asparagine glycosylation is present at Asn-383.

The protein belongs to the glycosyl hydrolase 16 family. CRH1 subfamily. In terms of processing, the GPI-like anchor contains a phosphoceramide lipid group. The anchor position has not been determined.

It localises to the cell membrane. The protein localises to the secreted. The protein resides in the cell wall. The catalysed reaction is Random endo-hydrolysis of N-acetyl-beta-D-glucosaminide (1-&gt;4)-beta-linkages in chitin and chitodextrins.. Its function is as follows. Dual chitinase/transglycosylase that plays a role in cell wall architecture. Chitinase and transglycosylase activities are coupled. Required for the polysaccharide cross-linking at the septa and the cell wall. More specifically, transfers chitin to 1,6-beta-glucan in the cell wall. The sequence is that of Crh-like protein 4 from Aspergillus fumigatus (strain ATCC MYA-4609 / CBS 101355 / FGSC A1100 / Af293) (Neosartorya fumigata).